Consider the following 142-residue polypeptide: Immunoglobulin iota chain (142 aa).

Residues 1 to 19 (MAWTSVLLMLLAYLTGCGP) form the signal peptide. The interval 20 to 41 (QPMVHQPPLASSSLGATIRLSC) is framework-1. Cys41 and Cys115 are disulfide-bonded. The segment at 42–56 (TLSNDHNIGIYSIYW) is complementarity-determining-1. The interval 57 to 70 (YQQRPGHPPRFLLR) is framework-2. Residues 71-81 (YFSHSDKHQGP) are complementarity-determining-2. Residues 82–115 (DIPPRFSGSKDTTRNLGYLSISELQPEDEAVYYC) form a framework-3 region.

Belongs to the immunoglobulin superfamily. As to quaternary structure, interacts with IGLL1. Interacts with SYNV1/HRD1 (via N-terminus); this interaction leads to increased VPREB1A ubiquitination and degradation in pre-B cells, possibly through a lysosomal, not proteasomal, pathway. As to expression, only expressed by pre-B-cells.

The protein resides in the endoplasmic reticulum. Its function is as follows. Associates with the Ig-mu chain to form a molecular complex that is expressed on the surface of pre-B-cells. This complex presumably regulates Ig gene rearrangements in the early steps of B-cell differentiation. The polypeptide is Immunoglobulin iota chain (Mus musculus (Mouse)).